Consider the following 115-residue polypeptide: Delta-hexatoxin-Hi1a (115 aa).

An N-terminal signal peptide occupies residues 1–18 (MKVIATLYGLLFLTVVLG). A propeptide spanning residues 19–73 (DITEGNENDLVENFREELSEADIPLLKKLEAIEDALLEKDFLPYEEEDRNARPKR) is cleaved from the precursor. Intrachain disulfides connect C74–C88, C81–C93, C87–C104, and C89–C115.

Belongs to the neurotoxin 06 (delta-actx) family. In terms of tissue distribution, expressed by the venom gland.

It localises to the secreted. In terms of biological role, neurotoxin that slows inactivation of voltage-gated sodium channels (Nav). In vivo, is lethal to both vertebrates and insects. This Hadronyche infensa (Fraser island funnel-web spider) protein is Delta-hexatoxin-Hi1a.